The primary structure comprises 356 residues: Pyrimidine monooxygenase RutA (356 aa).

FMN is bound by residues isoleucine 49 to lysine 50, asparagine 115, glutamate 124, arginine 140 to tyrosine 141, and serine 190.

This sequence belongs to the NtaA/SnaA/DszA monooxygenase family. RutA subfamily.

The enzyme catalyses uracil + FMNH2 + NADH + O2 = (Z)-3-ureidoacrylate + FMN + NAD(+) + H2O + H(+). The catalysed reaction is thymine + FMNH2 + NADH + O2 = (Z)-2-methylureidoacrylate + FMN + NAD(+) + H2O + H(+). Functionally, catalyzes the pyrimidine ring opening between N-3 and C-4 by an unusual flavin hydroperoxide-catalyzed mechanism, adding oxygen atoms in the process to yield ureidoacrylate peracid, that immediately reacts with FMN forming ureidoacrylate and FMN-N(5)-oxide. The FMN-N(5)-oxide reacts spontaneously with NADH to produce FMN. Requires the flavin reductase RutF to regenerate FMN in vivo. The chain is Pyrimidine monooxygenase RutA from Haliangium ochraceum (strain DSM 14365 / JCM 11303 / SMP-2).